The chain runs to 92 residues: Non-specific lipid-transfer protein 2 (92 aa).

4 disulfides stabilise this stretch: Cys-4–Cys-52, Cys-14–Cys-28, Cys-29–Cys-74, and Cys-50–Cys-88.

Belongs to the plant LTP family. In terms of tissue distribution, expressed in seeds and, at very low levels, in pulp of fruit (at protein level).

In terms of biological role, plant non-specific lipid-transfer proteins transfer phospholipids as well as galactolipids across membranes. May play a role in wax or cutin deposition in the cell walls of expanding epidermal cells and certain secretory tissues. The chain is Non-specific lipid-transfer protein 2 from Actinidia deliciosa (Kiwi).